The primary structure comprises 90 residues: Small ribosomal subunit protein uS17 (90 aa).

This sequence belongs to the universal ribosomal protein uS17 family. In terms of assembly, part of the 30S ribosomal subunit.

Its function is as follows. One of the primary rRNA binding proteins, it binds specifically to the 5'-end of 16S ribosomal RNA. The protein is Small ribosomal subunit protein uS17 of Burkholderia thailandensis (strain ATCC 700388 / DSM 13276 / CCUG 48851 / CIP 106301 / E264).